Here is a 140-residue protein sequence, read N- to C-terminus: Large ribosomal subunit protein uL15 (140 aa).

The tract at residues 1-31 (MDTKKFRGSRTCGGGTHKNRRGAGNRGGRGK) is disordered.

It belongs to the universal ribosomal protein uL15 family. Part of the 50S ribosomal subunit.

In terms of biological role, binds to the 23S rRNA. The chain is Large ribosomal subunit protein uL15 from Methanosarcina barkeri (strain Fusaro / DSM 804).